Consider the following 404-residue polypeptide: Cysteine desulfurase IscS (404 aa).

Residues 75 to 76 (AT), asparagine 155, glutamine 183, and 203 to 205 (SGH) contribute to the pyridoxal 5'-phosphate site. Residue lysine 206 is modified to N6-(pyridoxal phosphate)lysine. Threonine 243 contacts pyridoxal 5'-phosphate. Cysteine 328 serves as the catalytic Cysteine persulfide intermediate. Cysteine 328 lines the [2Fe-2S] cluster pocket.

The protein belongs to the class-V pyridoxal-phosphate-dependent aminotransferase family. NifS/IscS subfamily. Homodimer. Forms a heterotetramer with IscU, interacts with other sulfur acceptors. Pyridoxal 5'-phosphate serves as cofactor.

It localises to the cytoplasm. It carries out the reaction (sulfur carrier)-H + L-cysteine = (sulfur carrier)-SH + L-alanine. It functions in the pathway cofactor biosynthesis; iron-sulfur cluster biosynthesis. Its function is as follows. Master enzyme that delivers sulfur to a number of partners involved in Fe-S cluster assembly, tRNA modification or cofactor biosynthesis. Catalyzes the removal of elemental sulfur atoms from cysteine to produce alanine. Functions as a sulfur delivery protein for Fe-S cluster synthesis onto IscU, an Fe-S scaffold assembly protein, as well as other S acceptor proteins. This is Cysteine desulfurase IscS from Shewanella sp. (strain MR-4).